Consider the following 340-residue polypeptide: Glyceraldehyde-3-phosphate dehydrogenase (340 aa).

Residues 11–12 (SI) and glycine 111 each bind NAD(+). 140–142 (SCN) contacts D-glyceraldehyde 3-phosphate. Cysteine 141 functions as the Nucleophile in the catalytic mechanism. Arginine 169 contributes to the NAD(+) binding site. D-glyceraldehyde 3-phosphate is bound at residue 195-196 (HG). Glutamine 303 contacts NAD(+).

This sequence belongs to the glyceraldehyde-3-phosphate dehydrogenase family. As to quaternary structure, homotetramer.

The protein resides in the cytoplasm. The enzyme catalyses D-glyceraldehyde 3-phosphate + phosphate + NADP(+) = (2R)-3-phospho-glyceroyl phosphate + NADPH + H(+). The catalysed reaction is D-glyceraldehyde 3-phosphate + phosphate + NAD(+) = (2R)-3-phospho-glyceroyl phosphate + NADH + H(+). It functions in the pathway carbohydrate degradation; glycolysis; pyruvate from D-glyceraldehyde 3-phosphate: step 1/5. This is Glyceraldehyde-3-phosphate dehydrogenase from Methanococcus maripaludis (strain C5 / ATCC BAA-1333).